A 286-amino-acid polypeptide reads, in one-letter code: MRLIIVSGRSGSGKSTALNVLEDNGFYCIDNLPASLLPDLAQRALLHTELLHPQVAVSIDARNLPSQLQRFPELLQEVRDNHINCDVLYLDADDETLLKRFSETRRRHPLTTDTRSLAEAIGDESQLLGPIADLADLKLDTTSLNLYQLRDTIKLRLLNKPEPGTAFLVESFGFKRGMPVDADLVFDVRCLPNPYWKPELRDHSGLEPEVREYLAAQPDVEEMYQDIVGYLNKWLPRFAASNRSYVTVAIGCTGGHHRSVYLAERIGAALRESLKNVQIRHRDLNS.

8–15 (GRSGSGKS) contacts ATP. A GTP-binding site is contributed by 60–63 (DARN).

It belongs to the RapZ-like family.

Functionally, displays ATPase and GTPase activities. The protein is Nucleotide-binding protein PSPA7_5038 of Pseudomonas paraeruginosa (strain DSM 24068 / PA7) (Pseudomonas aeruginosa (strain PA7)).